A 478-amino-acid chain; its full sequence is Ubiquitin carboxyl-terminal hydrolase calypso (478 aa).

The 229-residue stretch at 11–239 (GWLELESDPG…IRFNLMAVVP (229 aa)) folds into the UCH catalytic domain. Cys-97 serves as the catalytic Nucleophile. Residue His-176 is the Proton donor of the active site. The ULD domain maps to 400 to 428 (NYDEFICTFLSMLAHQGELGDLVSQHLIT). The positively charged C-terminal tail required for binding nucleosomes stretch occupies residues 430-478 (RKPNMGSVQNSGSRGVVRNYNKKTTTNGSSPKTPSSKRRRGRTKYRKRK). The segment covering 432 to 442 (PNMGSVQNSGS) has biased composition (polar residues). A disordered region spans residues 432–478 (PNMGSVQNSGSRGVVRNYNKKTTTNGSSPKTPSSKRRRGRTKYRKRK). Positions 464–478 (SSKRRRGRTKYRKRK) are enriched in basic residues.

Belongs to the peptidase C12 family. BAP1 subfamily. In terms of assembly, catalytic component of the polycomb repressive deubiquitinase (PR-DUB) complex, at least composed of caly/calypso, Asx and sba (MBD5/6 homolog). The PR-DUB complex associates with nucleosomes to mediate deubiquitination of histone H2AK118ub1 substrates; the association requires the positively charged C-terminal tail of caly, probably due to direct binding of DNA. Interacts (via ULD domain) with Asx (via DEUBAD domain); the interaction produces a stable heterodimer with a composite binding site for ubiquitin. Homodimerizes (via coiled-coil hinge-region between the UCH and ULD domains) to mediate assembly of 2 copies of the caly-Asx heterodimer into a bisymmetric tetramer; dimerization enhances PR-DUB association with nucleosomes.

The protein resides in the nucleus. It carries out the reaction Thiol-dependent hydrolysis of ester, thioester, amide, peptide and isopeptide bonds formed by the C-terminal Gly of ubiquitin (a 76-residue protein attached to proteins as an intracellular targeting signal).. In terms of biological role, catalytic component of the polycomb repressive deubiquitinase (PR-DUB) complex, a complex that specifically mediates deubiquitination of histone H2A monoubiquitinated at 'Lys-119' (H2AK118ub1). Mediates bisymmetric organization of the PR-DUB complex and is involved in association with nucleosomes to mediate deubiquitination. Does not deubiquitinate monoubiquitinated histone H2B. Required to maintain the transcriptionally repressive state of homeotic genes throughout development. The PR-DUB complex has weak or no activity toward 'Lys-48'- and 'Lys-63'-linked polyubiquitin chains. Polycomb group (PcG) protein. The protein is Ubiquitin carboxyl-terminal hydrolase calypso of Aedes aegypti (Yellowfever mosquito).